A 352-amino-acid polypeptide reads, in one-letter code: Geranylgeranyl transferase type-1 subunit beta (352 aa).

PFTB repeat units lie at residues 135–180 (VNKK…FILD), 187–228 (KESA…SLLG), 236–276 (FKEQ…MMID), and 283–325 (FASI…SFGN). Geranylgeranyl diphosphate is bound by residues 213 to 215 (HGG) and 255 to 258 (RTNK). The Zn(2+) site is built by Asp261 and Cys263. 264–267 (YAFW) serves as a coordination point for geranylgeranyl diphosphate. His313 serves as a coordination point for Zn(2+).

Belongs to the protein prenyltransferase subunit beta family. In terms of assembly, heterodimer of an alpha and a beta subunit. Requires Zn(2+) as cofactor. Mg(2+) is required as a cofactor.

It carries out the reaction geranylgeranyl diphosphate + L-cysteinyl-[protein] = S-geranylgeranyl-L-cysteinyl-[protein] + diphosphate. Catalyzes the transfer of a geranyl-geranyl moiety from geranyl-geranyl pyrophosphate to a cysteine at the fourth position from the C-terminus of proteins having the C-terminal sequence Cys-aliphatic-aliphatic-X. This chain is Geranylgeranyl transferase type-1 subunit beta (pggt1b), found in Dictyostelium discoideum (Social amoeba).